We begin with the raw amino-acid sequence, 699 residues long: Elongation factor G (699 aa).

Positions 8–286 (EKLRNIGIVA…AVIVTYPLPI (279 aa)) constitute a tr-type G domain. Residues 17–24 (AHIDAGKT), 84–88 (DTPGH), and 138–141 (NKMD) contribute to the GTP site.

Belongs to the TRAFAC class translation factor GTPase superfamily. Classic translation factor GTPase family. EF-G/EF-2 subfamily.

The protein resides in the cytoplasm. Functionally, catalyzes the GTP-dependent ribosomal translocation step during translation elongation. During this step, the ribosome changes from the pre-translocational (PRE) to the post-translocational (POST) state as the newly formed A-site-bound peptidyl-tRNA and P-site-bound deacylated tRNA move to the P and E sites, respectively. Catalyzes the coordinated movement of the two tRNA molecules, the mRNA and conformational changes in the ribosome. This is Elongation factor G (fusA) from Aquifex pyrophilus.